The sequence spans 71 residues: Conotoxin LvVIB (71 aa).

The N-terminal stretch at 1-17 is a signal peptide; that stretch reads VLIIAVLFLTASELVTA. Positions 18-41 are excised as a propeptide; sequence DYTRDKWQYRAASLRDAMRNFRDT. 3 disulfide bridges follow: cysteine 43–cysteine 57, cysteine 50–cysteine 62, and cysteine 56–cysteine 69.

This sequence belongs to the conotoxin O1 superfamily. In terms of tissue distribution, expressed by the venom duct.

It is found in the secreted. The chain is Conotoxin LvVIB from Conus lividus (Livid cone).